The following is a 125-amino-acid chain: MKHKQRWAGAICCFVLFIVVCLFLATHMKGAFRAAGHPEIGLLFFILPGAVASFFSQRREVLKPLFGAMLAAPCSMLIMRLFFSPTRSFWQELAWLLSAVFWCALGALCFLFISSLFKPQHRKNQ.

Over 1–6 the chain is Cytoplasmic; sequence MKHKQR. Residues 7–27 form a helical membrane-spanning segment; the sequence is WAGAICCFVLFIVVCLFLATH. The Periplasmic portion of the chain corresponds to 28–34; sequence MKGAFRA. The chain crosses the membrane as a helical span at residues 35-55; the sequence is AGHPEIGLLFFILPGAVASFF. At 56 to 64 the chain is on the cytoplasmic side; that stretch reads SQRREVLKP. Residues 65-85 form a helical membrane-spanning segment; the sequence is LFGAMLAAPCSMLIMRLFFSP. Over 86 to 92 the chain is Periplasmic; that stretch reads TRSFWQE. The helical transmembrane segment at 93 to 113 threads the bilayer; the sequence is LAWLLSAVFWCALGALCFLFI. Residues 114–125 lie on the Cytoplasmic side of the membrane; sequence SSLFKPQHRKNQ.

It is found in the cell inner membrane. The protein is Inner membrane protein YbjM (ybjM) of Escherichia coli O157:H7.